The following is a 346-amino-acid chain: Pheromone receptor 2 (346 aa).

7 helical membrane passes run 8–28 (VSFG…CLIH), 34–54 (IGVL…GINA), 71–94 (LSAI…LQRL), 115–135 (LIDF…FFIV), 160–180 (FIYH…AVLV), 219–239 (VLVS…GGLL), and 270–290 (LSIL…FFGL).

It belongs to the G-protein coupled receptor 4 family.

It localises to the membrane. Its function is as follows. Receptor for the A1 pheromone, a prenylated mating factor. This Mycosarcoma maydis (Corn smut fungus) protein is Pheromone receptor 2 (PRA2).